We begin with the raw amino-acid sequence, 734 residues long: 1,4-alpha-glucan branching enzyme GlgB (734 aa).

Asp417 acts as the Nucleophile in catalysis. Glu470 acts as the Proton donor in catalysis.

Belongs to the glycosyl hydrolase 13 family. GlgB subfamily. In terms of assembly, monomer.

It catalyses the reaction Transfers a segment of a (1-&gt;4)-alpha-D-glucan chain to a primary hydroxy group in a similar glucan chain.. The protein operates within glycan biosynthesis; glycogen biosynthesis. Functionally, catalyzes the formation of the alpha-1,6-glucosidic linkages in glycogen by scission of a 1,4-alpha-linked oligosaccharide from growing alpha-1,4-glucan chains and the subsequent attachment of the oligosaccharide to the alpha-1,6 position. This is 1,4-alpha-glucan branching enzyme GlgB (glgB) from Rhizobium radiobacter (Agrobacterium tumefaciens).